The primary structure comprises 241 residues: MLVVGLTGGIACGKSTVSRRLRDKYKLPIVDADKIARQVVEPGQNAYDQIVLYFKDKIPNLLLEDGHLNREALGKWVFSHKEDLQALNGITHPAIRYAMFKEIGYYYLKGYRMCVLDVPLLFEGNLDSICGVTVSVICTQELQLERLMTRNPELSEEDAKNRLNSQMSTEERMARSDYILQNNSTLVDLYEQIESVVKKIQPSKLRTVLEYFPPFGAVSASSIVMSRLLMKKLQNKKSSAV.

A DPCK domain is found at 3–211 (VVGLTGGIAC…PSKLRTVLEY (209 aa)). 8-15 (GGIACGKS) serves as a coordination point for ATP.

Belongs to the CoaE family.

It is found in the endoplasmic reticulum. It localises to the mitochondrion. The protein localises to the nucleus. The catalysed reaction is 3'-dephospho-CoA + ATP = ADP + CoA + H(+). The protein operates within cofactor biosynthesis; coenzyme A biosynthesis; CoA from (R)-pantothenate: step 5/5. In terms of biological role, catalyzes the phosphorylation of the 3'-hydroxyl group of dephosphocoenzyme A to form coenzyme A. The sequence is that of Dephospho-CoA kinase CAB5 (CAB5) from Saccharomyces cerevisiae (strain ATCC 204508 / S288c) (Baker's yeast).